A 98-amino-acid chain; its full sequence is UPF0251 protein SO_0727 (98 aa).

This sequence belongs to the UPF0251 family.

The sequence is that of UPF0251 protein SO_0727 from Shewanella oneidensis (strain ATCC 700550 / JCM 31522 / CIP 106686 / LMG 19005 / NCIMB 14063 / MR-1).